The primary structure comprises 622 residues: Probable potassium transport system protein Kup (622 aa).

12 helical membrane-spanning segments follow: residues 7 to 27 (LAIG…LYAF), 44 to 64 (VLGV…IQYV), 95 to 115 (GWLV…DSMI), 133 to 153 (PELQ…LFVL), 165 to 185 (FAPV…ISIV), 199 to 219 (AVLF…SVVL), 243 to 263 (WFGF…AMIV), 290 to 310 (LVIL…SGAF), 338 to 358 (IYIP…VLTF), 370 to 390 (IAVT…LVGV), 395 to 415 (WYYA…YFAA), and 422 to 442 (DGGW…TTWA).

The protein belongs to the HAK/KUP transporter (TC 2.A.72) family.

The protein resides in the cell inner membrane. The enzyme catalyses K(+)(in) + H(+)(in) = K(+)(out) + H(+)(out). Its function is as follows. Transport of potassium into the cell. Likely operates as a K(+):H(+) symporter. This is Probable potassium transport system protein Kup from Erythrobacter litoralis (strain HTCC2594).